The following is a 692-amino-acid chain: Ino eighty subunit 1 (692 aa).

Residues 1-25 (MGKRVYDPIHDTFQLREDNSDETKA) are compositionally biased toward basic and acidic residues. The tract at residues 1 to 133 (MGKRVYDPIH…RHLKKPDGEP (133 aa)) is disordered. Ser27 bears the Phosphoserine mark. The segment covering 28–56 (PMQSVKSGSQEEASPSSIQSETETVTTKS) has biased composition (polar residues). Acidic residues predominate over residues 64 to 80 (EIDDKNDDDSTQSEEEN). Polar residues predominate over residues 97–109 (GASTATGPVTTNT). The stretch at 340–385 (SKYVEVESKAQEQDMVDEQNEVKETEAENEKQESKAAYATTLFDIL) forms a coiled coil. Residues 465 to 485 (FMSKMEEGRKRERTNVTEVKK) show a composition bias toward basic and acidic residues. The interval 465 to 550 (FMSKMEEGRK…VTPAAPTETE (86 aa)) is disordered. 3 positions are modified to phosphoserine: Ser487, Ser493, and Ser504. Acidic residues predominate over residues 493–504 (SEEDGEGEDDKS). At Thr507 the chain carries Phosphothreonine. Residues 513 to 528 (SLLTPTPILESSSPMT) are compositionally biased toward polar residues.

Component of the chromatin-remodeling INO80 complex, at least composed of ARP4, ARP5, ARP8, RVB1, RVB2, TAF14, NHP10, IES1, IES3, IES4, IES6, ACT1, IES2, IES5 and INO80.

Its subcellular location is the nucleus. In terms of biological role, probably involved in transcription regulation via its interaction with the INO80 complex, a chromatin-remodeling complex. The protein is Ino eighty subunit 1 (IES1) of Saccharomyces cerevisiae (strain ATCC 204508 / S288c) (Baker's yeast).